The sequence spans 509 residues: Maturase K (509 aa).

Belongs to the intron maturase 2 family. MatK subfamily.

The protein localises to the plastid. It is found in the chloroplast. Its function is as follows. Usually encoded in the trnK tRNA gene intron. Probably assists in splicing its own and other chloroplast group II introns. This Atropa belladonna (Belladonna) protein is Maturase K.